Reading from the N-terminus, the 523-residue chain is Protein tweety homolog 3 (523 aa).

Residues 1 to 42 are Extracellular-facing; the sequence is MAGVSYAAPWWVSLLHRLPHFDLSWEATSSQFRPEDTDYQQA. A helical transmembrane segment spans residues 43–63; it reads LLLLGAAALACLALDLLFLLF. Residues 64 to 86 are Cytoplasmic-facing; the sequence is YSFWLCCRRRKSEEHLDADCCCT. A helical transmembrane segment spans residues 87-107; it reads AWCVIIATLVCSAGIAVGFYG. Residues 108–211 lie on the Extracellular side of the membrane; the sequence is NGETSDGIHR…VDLYDWYRWL (104 aa). The Ca(2+) site is built by E110 and D113. N-linked (GlcNAc...) asparagine glycans are attached at residues N126 and N144. The chain crosses the membrane as a helical span at residues 212 to 232; that stretch reads GYLGLLLLDVIICLLVLVGLI. Over 233 to 236 the chain is Cytoplasmic; it reads RSSK. A helical transmembrane segment spans residues 237 to 257; the sequence is GILVGVCLLGVLALVISWGAL. The Extracellular segment spans residues 258–386; the sequence is GLELAVSVGS…LTGFCYDGVE (129 aa). Cystine bridges form between C271–C381 and C299–C366. N351 is a glycosylation site (N-linked (GlcNAc...) asparagine). Residues 387–407 traverse the membrane as a helical segment; that stretch reads GLIYLALFSFVTALMFSSIVC. Over 408-523 the chain is Cytoplasmic; that stretch reads SVPHTWQQKR…QPRPDSSGSH (116 aa). Disordered stretches follow at residues 413-435 and 482-523; these read WQQK…RQAH and QNPR…SGSH. S496 carries the post-translational modification Phosphoserine. The PY-motif; mediates interaction with NEDD4L motif lies at 498-501; it reads PPSY. A compositionally biased stretch (polar residues) spans 501–523; it reads YTSSMRAKYLATSQPRPDSSGSH. 2 positions are modified to phosphoserine: S504 and S522.

The protein belongs to the tweety family. In terms of assembly, homotetramer; disulfide-linked. Homodimer. Interacts with NEDD4L. In terms of processing, ubiquitinated by NEDD4L. N-Glycosylated. Contains high-mannose, hybrid and complex oligosaccharides. Expressed in excitable tissues. Expressed in the brain, heart, skeletal muscle, colon, spleen, kidney and peripheral blood leukocytes.

The protein resides in the cell membrane. It catalyses the reaction chloride(in) = chloride(out). It carries out the reaction L-glutamate(out) = L-glutamate(in). Calcium-independent, swelling-dependent volume-regulated anion channel (VRAC-swell) which plays a pivotal role in the process of regulatory volume decrease (RVD) in the brain through the efflux of anions like chloride and organic osmolytes like glutamate. Probable large-conductance Ca(2+)-activated chloride channel. This chain is Protein tweety homolog 3 (TTYH3), found in Homo sapiens (Human).